A 122-amino-acid chain; its full sequence is T-cell receptor beta chain V region C5 (122 aa).

The first 7 residues, 1 to 7 (ILLCAKH), serve as a signal peptide directing secretion. Residues 8-103 (MEAAVTQSPR…TAVYFCASSG (96 aa)) form a v segment region. C31 and C99 are disulfide-bonded. The d segment stretch occupies residues 104–108 (TGGAL). The j segment stretch occupies residues 109–122 (DTQYFGPGTRLLVL).

This is T-cell receptor beta chain V region C5 from Mus musculus (Mouse).